The primary structure comprises 305 residues: Probable GTP 3',8-cyclase (305 aa).

Residues 6–233 (RHGRPVMSLR…MQDRKKYYID (228 aa)) form the Radical SAM core domain. Arg15 provides a ligand contact to GTP. Cys22 and Cys26 together coordinate [4Fe-4S] cluster. Residue Tyr28 participates in S-adenosyl-L-methionine binding. Cys29 is a [4Fe-4S] cluster binding site. GTP is bound at residue Arg62. Residue Gly66 participates in S-adenosyl-L-methionine binding. Thr92 is a GTP binding site. Ser116 serves as a coordination point for S-adenosyl-L-methionine. Lys153 is a GTP binding site. Residues Cys249 and Cys252 each contribute to the [4Fe-4S] cluster site. Residue 254–256 (RLR) coordinates GTP. Cys266 serves as a coordination point for [4Fe-4S] cluster.

The protein belongs to the radical SAM superfamily. MoaA family. [4Fe-4S] cluster serves as cofactor.

The enzyme catalyses GTP + AH2 + S-adenosyl-L-methionine = (8S)-3',8-cyclo-7,8-dihydroguanosine 5'-triphosphate + 5'-deoxyadenosine + L-methionine + A + H(+). It participates in cofactor biosynthesis; molybdopterin biosynthesis. Its function is as follows. Catalyzes the cyclization of GTP to (8S)-3',8-cyclo-7,8-dihydroguanosine 5'-triphosphate. In Methanothermobacter thermautotrophicus (strain ATCC 29096 / DSM 1053 / JCM 10044 / NBRC 100330 / Delta H) (Methanobacterium thermoautotrophicum), this protein is Probable GTP 3',8-cyclase.